A 77-amino-acid polypeptide reads, in one-letter code: Secapin (77 aa).

An N-terminal signal peptide occupies residues 1–32; sequence MKNYSKNATYLITVLLFSFVAMLLIIPSKCEA. A propeptide spanning residues 33–52 is cleaved from the precursor; that stretch reads VSNDMQPLEARTADLVQQPR. Cysteines 61 and 72 form a disulfide.

The protein belongs to the secapin family. As to expression, expressed by the venom gland.

It localises to the secreted. Nontoxic peptide. The protein is Secapin of Apis cerana cerana (Oriental honeybee).